The chain runs to 507 residues: ATP synthase subunit alpha, chloroplastic (507 aa).

Residue 170 to 177 participates in ATP binding; the sequence is GDRQTGKT.

This sequence belongs to the ATPase alpha/beta chains family. As to quaternary structure, F-type ATPases have 2 components, CF(1) - the catalytic core - and CF(0) - the membrane proton channel. CF(1) has five subunits: alpha(3), beta(3), gamma(1), delta(1), epsilon(1). CF(0) has four main subunits: a, b, b' and c.

It is found in the plastid. The protein resides in the chloroplast thylakoid membrane. The enzyme catalyses ATP + H2O + 4 H(+)(in) = ADP + phosphate + 5 H(+)(out). Produces ATP from ADP in the presence of a proton gradient across the membrane. The alpha chain is a regulatory subunit. The chain is ATP synthase subunit alpha, chloroplastic from Gossypium barbadense (Sea Island cotton).